We begin with the raw amino-acid sequence, 368 residues long: Apolipoprotein A-V (368 aa).

The N-terminal stretch at 1 to 20 (MAAVITWALALLAVFASTQA) is a signal peptide. Ser-52 is modified (phosphoserine). Residues 231–255 (TRKAKDLHTSIQRNLDQLRDELSAF) adopt a coiled-coil conformation. The interval 305 to 333 (EEIQHQLAPPPPSHSAFAPELGHSDSNKA) is disordered.

The protein belongs to the apolipoprotein A1/A4/E family. Interacts with GPIHBP1. Interacts with SORL1; this interaction leads to APOA5 internalization and sorting either to lysosomes and degradation, or to the trans-Golgi network. Post-translationally, phosphorylated by FAM20C in the extracellular medium. Liver.

It localises to the secreted. It is found in the early endosome. Its subcellular location is the late endosome. The protein resides in the golgi apparatus. The protein localises to the trans-Golgi network. Functionally, minor apolipoprotein mainly associated with HDL and to a lesser extent with VLDL. May also be associated with chylomicrons. Important determinant of plasma triglyceride (TG) levels by both being a potent stimulator of apo-CII lipoprotein lipase (LPL) TG hydrolysis and an inhibitor of the hepatic VLDL-TG production rate (without affecting the VLDL-apoB production rate). Activates poorly lecithin:cholesterol acyltransferase (LCAT) and does not enhance efflux of cholesterol from macrophages. Binds heparin. This Mus musculus (Mouse) protein is Apolipoprotein A-V (Apoa5).